A 350-amino-acid polypeptide reads, in one-letter code: Biotin synthase (350 aa).

The region spanning 38–256 is the Radical SAM core domain; that stretch reads NYVQVSTLLS…IAVARIMMPE (219 aa). Residues Cys-53, Cys-57, and Cys-60 each coordinate [4Fe-4S] cluster. Residues Cys-97, Cys-128, Cys-188, and Arg-260 each contribute to the [2Fe-2S] cluster site.

This sequence belongs to the radical SAM superfamily. Biotin synthase family. Homodimer. [4Fe-4S] cluster serves as cofactor. [2Fe-2S] cluster is required as a cofactor.

It carries out the reaction (4R,5S)-dethiobiotin + (sulfur carrier)-SH + 2 reduced [2Fe-2S]-[ferredoxin] + 2 S-adenosyl-L-methionine = (sulfur carrier)-H + biotin + 2 5'-deoxyadenosine + 2 L-methionine + 2 oxidized [2Fe-2S]-[ferredoxin]. Its pathway is cofactor biosynthesis; biotin biosynthesis; biotin from 7,8-diaminononanoate: step 2/2. In terms of biological role, catalyzes the conversion of dethiobiotin (DTB) to biotin by the insertion of a sulfur atom into dethiobiotin via a radical-based mechanism. In Aliivibrio salmonicida (strain LFI1238) (Vibrio salmonicida (strain LFI1238)), this protein is Biotin synthase.